Consider the following 455-residue polypeptide: Golgi pH regulator (455 aa).

5 helical membrane passes run 5-25, 46-66, 79-99, 114-134, and 150-170; these read IDSS…WLFF, VTFA…LGVL, LCVI…YFIV, CLLW…FPIL, and VGVI…VNCP. The N-linked (GlcNAc...) asparagine glycan is linked to asparagine 180. 4 consecutive transmembrane segments (helical) span residues 288-308, 343-363, 378-398, and 425-445; these read FLGY…TINI, ISFI…LITL, VIVL…VLLI, and WFDV…YLAH.

Belongs to the Golgi pH regulator (TC 1.A.38) family. In terms of assembly, homotrimer. Interacts with RABL3; the interaction stabilizes GPR89.

It is found in the golgi apparatus membrane. It catalyses the reaction iodide(out) = iodide(in). The enzyme catalyses chloride(in) = chloride(out). The catalysed reaction is bromide(in) = bromide(out). It carries out the reaction fluoride(in) = fluoride(out). Its function is as follows. Voltage-gated channel that enables the transfer of monoatomic anions such as iodide, chloride, bromide and fluoride which may function in counter-ion conductance and participates in Golgi acidification. Plays a role in lymphocyte development, probably by acting as a RABL3 effector in hematopoietic cells. The polypeptide is Golgi pH regulator (Mus musculus (Mouse)).